A 238-amino-acid polypeptide reads, in one-letter code: DNA repair protein RecO (238 aa).

This sequence belongs to the RecO family.

In terms of biological role, involved in DNA repair and RecF pathway recombination. The sequence is that of DNA repair protein RecO from Cereibacter sphaeroides (strain ATCC 17023 / DSM 158 / JCM 6121 / CCUG 31486 / LMG 2827 / NBRC 12203 / NCIMB 8253 / ATH 2.4.1.) (Rhodobacter sphaeroides).